The primary structure comprises 732 residues: Serine/threonine-protein kinase CBK1 (732 aa).

The interval 111 to 240 (SFDNHLNVDP…STEAANSDMT (130 aa)) is disordered. The segment covering 119-159 (DPNNTERFTSMDSMNFQPPASTFTQLGNGSSTNLSEISSGQ) has biased composition (polar residues). The segment covering 160-171 (NSLLSNHSVNNL) has biased composition (low complexity). The span at 172 to 183 (PTALTSDTSPPV) shows a compositional bias: polar residues. Low complexity predominate over residues 185–221 (QHPQFQPQQQQQQQQPQQQQIFQQQQQQQQQQQQPQQ). Positions 222–240 (SRAVVNQSVSTEAANSDMT) are enriched in polar residues. Residues 281-310 (HAIERNQRRLELENKIANEDIGSSEERKNR) are a coiled coil. One can recognise a Protein kinase domain in the interval 335-647 (FHTVKVIGKG…AEEIKQHPFF (313 aa)). ATP-binding positions include 341 to 349 (IGKGAFGEV) and lysine 364. Aspartate 458 functions as the Proton acceptor in the catalytic mechanism. In terms of domain architecture, AGC-kinase C-terminal spans 648–730 (RGVDWDSIRD…SRFDYLTRKN (83 aa)).

Belongs to the protein kinase superfamily. STE Ser/Thr protein kinase family. COT1 subfamily. As to quaternary structure, interacts with MOB2 and BCR1.

It is found in the bud neck. Its subcellular location is the cell tip. It catalyses the reaction L-seryl-[protein] + ATP = O-phospho-L-seryl-[protein] + ADP + H(+). The enzyme catalyses L-threonyl-[protein] + ATP = O-phospho-L-threonyl-[protein] + ADP + H(+). Its function is as follows. Serine/threonine-protein kinase required for wild-type hyphal growth and transcriptional regulation of cell-wall-associated genes. Involved in the biofilm formation through phosphorylation of the master regulator of biofilm formation BCR1. The polypeptide is Serine/threonine-protein kinase CBK1 (CBK1) (Candida albicans (strain SC5314 / ATCC MYA-2876) (Yeast)).